The primary structure comprises 246 residues: 33kDa venom protein (246 aa).

A signal peptide spans 1 to 20 (MAGKEVIFIMALFIAVESSP). 7 tandem repeats follow at residues 83–96 (GGAV…KRET), 97–110 (AESL…EKAS), 111–124 (AENL…QKSS), 125–138 (VDEK…QKGA), 139–152 (VEGQ…RRET), 153–166 (AESQ…EKAS), and 167–180 (AENL…QKVT). The 12 X approximate tandem repeats of [AV][DE]X[VL]SGSX[DE]QX[KR]X[ST] stretch occupies residues 83–243 (GGAVSESVKQ…SGSVGNDDDI (161 aa)). The disordered stretch occupies residues 88–246 (ESVKQKRETA…VGNDDDISVQ (159 aa)). Residues 112–123 (ENLSGSFDQQKS) show a composition bias toward polar residues. Residues 175–186 (DKQKVTVEEKSE) show a composition bias toward basic and acidic residues. The 8; half-length repeat unit spans residues 181-187 (VEEKSEP). Tandem repeats lie at residues 188–201 (AQGQ…KRKT), 202–215 (TENV…EKAS), 216–229 (AESL…QKSS), and 230–243 (VDEK…DDDI). A compositionally biased stretch (polar residues) spans 217 to 228 (ESLSGSFDQQKS).

As to expression, expressed by the venom gland.

Its subcellular location is the secreted. This Chelonus sp. nr. curvimaculatus (Parasitic wasp) protein is 33kDa venom protein.